The sequence spans 292 residues: Ribosomal RNA small subunit methyltransferase A (292 aa).

S-adenosyl-L-methionine-binding residues include asparagine 28, leucine 30, glycine 55, glutamate 76, aspartate 101, and asparagine 126.

This sequence belongs to the class I-like SAM-binding methyltransferase superfamily. rRNA adenine N(6)-methyltransferase family. RsmA subfamily.

The protein localises to the cytoplasm. It carries out the reaction adenosine(1518)/adenosine(1519) in 16S rRNA + 4 S-adenosyl-L-methionine = N(6)-dimethyladenosine(1518)/N(6)-dimethyladenosine(1519) in 16S rRNA + 4 S-adenosyl-L-homocysteine + 4 H(+). Its function is as follows. Specifically dimethylates two adjacent adenosines (A1518 and A1519) in the loop of a conserved hairpin near the 3'-end of 16S rRNA in the 30S particle. May play a critical role in biogenesis of 30S subunits. In Bacillus cereus (strain G9842), this protein is Ribosomal RNA small subunit methyltransferase A.